The following is a 1478-amino-acid chain: Serine/threonine-protein kinase BCK1/SLK1/SSP31 (1478 aa).

4 disordered regions span residues 1 to 70 (MPFL…TSSQ), 99 to 126 (TSFT…GGNS), 217 to 359 (NVTN…RRHH), and 373 to 427 (FGSG…KGNL). Positions 29 to 49 (PTSSVASTKSSSKSPRATSRK) are enriched in low complexity. Composition is skewed to polar residues over residues 58–70 (QFPN…TSSQ) and 99–110 (TSFTNSSYKNDN). The span at 111–126 (GPSSLSDSRKSSGGNS) shows a compositional bias: low complexity. Basic residues predominate over residues 223-233 (IRQKSASKLKS). Composition is skewed to polar residues over residues 253-273 (DISN…SGPS) and 281-297 (LHST…SSLY). 2 stretches are compositionally biased toward low complexity: residues 298–320 (RRSF…SPSN) and 342–353 (SASPPASPSYPS). Polar residues-rich tracts occupy residues 386–396 (NPQGHSLSSEN) and 407–420 (TNVS…SLPT). Thr407 is modified (phosphothreonine). Phosphoserine occurs at positions 411 and 491. The disordered stretch occupies residues 644–671 (KPKPAPLTSENNVPLKSVKSKSSMRSGT). A compositionally biased stretch (low complexity) spans 659–671 (KSVKSKSSMRSGT). Ser747 is modified (phosphoserine). 4 disordered regions span residues 752 to 877 (LNLP…ASTH), 895 to 939 (KTDQ…RGNS), 960 to 1021 (ADAP…TQDK), and 1053 to 1116 (TEGI…TPKR). Residues 765–777 (TPITENESKSSFQ) are compositionally biased toward polar residues. Positions 779 to 809 (LRKDEGTEIDFNHRRESPYTKPELAPKREAP) are enriched in basic and acidic residues. Positions 813 to 827 (ANTSPQRTLSTSKQN) are enriched in polar residues. At Ser816 the chain carries Phosphoserine. Composition is skewed to low complexity over residues 851–870 (QLLS…LTSS) and 914–925 (NRSNSTVSTSNS). Over residues 967–977 (DSDDSDDDSSS) the composition is skewed to acidic residues. A compositionally biased stretch (basic and acidic residues) spans 994–1011 (NENKKDEKSDNSSTHSDE). Phosphoserine occurs at positions 1058 and 1061. Positions 1058–1083 (SPTSPKSLDSLLSPKNVASSRTEPST) are enriched in low complexity. Ser1134 is subject to Phosphoserine; by PKC. The region spanning 1175 to 1440 (WMKGEMIGKG…ANELLSHPFS (266 aa)) is the Protein kinase domain. ATP contacts are provided by residues 1181–1189 (IGKGSFGAV) and Lys1204. Asp1303 (proton acceptor) is an active-site residue.

Belongs to the protein kinase superfamily. STE Ser/Thr protein kinase family. MAP kinase kinase kinase subfamily.

The protein resides in the cytoplasm. The enzyme catalyses L-seryl-[protein] + ATP = O-phospho-L-seryl-[protein] + ADP + H(+). It catalyses the reaction L-threonyl-[protein] + ATP = O-phospho-L-threonyl-[protein] + ADP + H(+). Its function is as follows. Serine/threonine protein kinase involved in a signal transduction pathway that plays a role in yeast cell morphogenesis and cell growth. This pathway seems to start by SMP3; then involve the kinase PKC1 that may act on this kinase. BCK1 probably phosphorylates MKK1 and MKK2 which themselves phosphorylate the MPK1 kinase. The protein is Serine/threonine-protein kinase BCK1/SLK1/SSP31 (BCK1) of Saccharomyces cerevisiae (strain ATCC 204508 / S288c) (Baker's yeast).